The following is a 232-amino-acid chain: Protein G1-like3 (232 aa).

Disordered regions lie at residues 20 to 77 and 189 to 232; these read AGLL…YEAQ and ARAR…GAAC. A compositionally biased stretch (gly residues) spans 38–53; sequence AGGGGGGGGDGAGGSS. The 128-residue stretch at 73 to 200 folds into the ALOG domain; the sequence is RYEAQKRRDW…ARGVSYEKKK (128 aa). A Nuclear localization signal motif is present at residues 198-202; that stretch reads KKKRK. The span at 216–232 shows a compositional bias: pro residues; the sequence is PHPPPPPPPPPSAGAAC.

This sequence belongs to the plant homeotic and developmental regulators ALOG protein family.

The protein resides in the nucleus. Its function is as follows. Probable transcription regulator that acts as a developmental regulator by promoting cell growth in response to light. The protein is Protein G1-like3 of Oryza sativa subsp. indica (Rice).